Reading from the N-terminus, the 227-residue chain is Staphylococcal superantigen-like 10 (227 aa).

Residues 1 to 30 form the signal peptide; sequence MKFTALAKATLALGILTTGTLTTEVHSGHA.

The protein belongs to the staphylococcal/streptococcal toxin family. As to quaternary structure, interacts with prothrombin/F2 and coagulation factor X/F12. Interacts with human CXCR4.

The protein localises to the secreted. Functionally, plays a role in the inhibition of host complement activation via the classical pathway by interacting with the Fc region of human IgG and thereby interfering with the IgG/C1q interaction. Also inhibits the penultimate step of plasma clotting by interacting with prothrombin/F2 and coagulation factor X/F12. Does not affect the protease activity of thrombin but interferes with the conversion of prothrombin to thrombin. Interacts with human receptor CXCR4 and specifically inhibits CXCL12-induced calcium mobilization and cell migration. The sequence is that of Staphylococcal superantigen-like 10 from Staphylococcus aureus (strain NCTC 8325 / PS 47).